The sequence spans 413 residues: Alpha-1-antiproteinase (413 aa).

A signal peptide spans 1–24; sequence MTPSISWRLLLLAGLCCLVPSYLA. Position 33 is a phosphoserine (serine 33). 3 N-linked (GlcNAc...) asparagine glycosylation sites follow: asparagine 64, asparagine 101, and asparagine 265. Residues 368 to 387 form an RCL region; it reads ATTIVEAVFMSLPPILHFNH. Serine 378 is modified (phosphoserine).

This sequence belongs to the serpin family. In terms of assembly, interacts with CELA2A. Interacts with ERGIC3 and LMAN1/ERGIC53. Interacts with PRSS1/Trypsin.

The protein resides in the secreted. Its function is as follows. Inhibitor of serine proteases. The primary target is elastase, but also has a moderate affinity for plasmin and thrombin. In Mus saxicola (Brown spiny mouse), this protein is Alpha-1-antiproteinase (Serpina1).